The primary structure comprises 405 residues: Elongation factor Tu (405 aa).

Residues 10–215 (KPHVNIGTIG…AVDSYIPTPE (206 aa)) form the tr-type G domain. A G1 region spans residues 19 to 26 (GHVDHGKT). 19-26 (GHVDHGKT) provides a ligand contact to GTP. A Mg(2+)-binding site is contributed by T26. The interval 61 to 65 (GITIN) is G2. The tract at residues 82-85 (DCPG) is G3. GTP is bound by residues 82–86 (DCPGH) and 137–140 (NKVD). The interval 137-140 (NKVD) is G4. The G5 stretch occupies residues 175 to 177 (SAL).

The protein belongs to the TRAFAC class translation factor GTPase superfamily. Classic translation factor GTPase family. EF-Tu/EF-1A subfamily. In terms of assembly, monomer.

The protein localises to the cytoplasm. The catalysed reaction is GTP + H2O = GDP + phosphate + H(+). In terms of biological role, GTP hydrolase that promotes the GTP-dependent binding of aminoacyl-tRNA to the A-site of ribosomes during protein biosynthesis. In Deinococcus radiodurans (strain ATCC 13939 / DSM 20539 / JCM 16871 / CCUG 27074 / LMG 4051 / NBRC 15346 / NCIMB 9279 / VKM B-1422 / R1), this protein is Elongation factor Tu.